The primary structure comprises 358 residues: 2'-5'-oligoadenylate synthase 1A (358 aa).

The tract at residues 14–61 (DKFIEVYLLPNTSFRDDVKSAINVLCDFLKERCFRDTVHPVRVSKVVK) is interaction with dsRNA. Serine 64 contributes to the ATP binding site. 3 residues coordinate Mg(2+): aspartate 76, aspartate 78, and aspartate 149. Positions 201–211 (QRPTKLKSLIR) are interaction with dsRNA. ATP-binding residues include arginine 211, lysine 214, and glutamine 231.

It belongs to the 2-5A synthase family. As to quaternary structure, monomer. Homotetramer. Interacts with OAS1D. Requires Mg(2+) as cofactor.

The protein resides in the cytoplasm. Its subcellular location is the mitochondrion. It is found in the nucleus. It localises to the microsome. The protein localises to the endoplasmic reticulum. It catalyses the reaction 3 ATP = 5'-triphosphoadenylyl-(2'-&gt;5')-adenylyl-(2'-&gt;5')-adenosine + 2 diphosphate. Its activity is regulated as follows. Produced as a latent enzyme which is activated by dsRNA generated during the course of viral infection. The dsRNA activator must be at least 15 nucleotides long, and no modification of the 2'-hydroxyl group is tolerated. ssRNA or dsDNA do not act as activators. Its function is as follows. Interferon-induced, dsRNA-activated antiviral enzyme which plays a critical role in cellular innate antiviral response. In addition, it may also play a role in other cellular processes such as apoptosis, cell growth, differentiation and gene regulation. Synthesizes higher oligomers of 2'-5'-oligoadenylates (2-5A) from ATP which then bind to the inactive monomeric form of ribonuclease L (RNase L) leading to its dimerization and subsequent activation. Activation of RNase L leads to degradation of cellular as well as viral RNA, resulting in the inhibition of protein synthesis, thus terminating viral replication. Can mediate the antiviral effect via the classical RNase L-dependent pathway or an alternative antiviral pathway independent of RNase L. This chain is 2'-5'-oligoadenylate synthase 1A (Oas1a), found in Rattus norvegicus (Rat).